We begin with the raw amino-acid sequence, 753 residues long: Elongin-A2 (753 aa).

The 76-residue stretch at 5 to 80 (STTLHAVEKL…ARWKKLVLVD (76 aa)) folds into the TFIIS N-terminal domain. Disordered stretches follow at residues 80–245 (DRNT…DWHS), 261–453 (ETPR…GPKT), and 477–497 (LSDS…SPKF). Composition is skewed to basic and acidic residues over residues 147-157 (HSREPRAERKC) and 271-285 (ARDR…DKEG). A compositionally biased stretch (basic residues) spans 306–317 (KRPQHSHSNKKR). The span at 333-348 (SPEEKEQLSNDRETQE) shows a compositional bias: basic and acidic residues. Over residues 366–377 (EVEEVDMAEEFE) the composition is skewed to acidic residues. The span at 409 to 428 (DKQRKANESKGTRESWDSAK) shows a compositional bias: basic and acidic residues. The segment at 500 to 659 (EAAFPGRRVN…TPYDTSRRQE (160 aa)) is activation domain. Positions 528 to 537 (TLRQQCAQVL) are BC-box. The tract at residues 528 to 537 (TLRQQCAQVL) is interacting with Elongin BC complex. The segment at 650–735 (TPYDTSRRQE…KTRKQAAKKV (86 aa)) is disordered. Residues 654 to 663 (TSRRQEKSAG) show a composition bias toward basic and acidic residues. A compositionally biased stretch (low complexity) spans 680 to 700 (GSSHTPSSQSSSGGGRDSSSS).

Heterotrimer of an A (ELOA, ELOA2 or ELOA3P), ELOB and ELOC subunit. In terms of tissue distribution, specifically expressed in testis.

It is found in the nucleus. Its function is as follows. SIII, also known as elongin, is a general transcription elongation factor that increases the RNA polymerase II transcription elongation past template-encoded arresting sites. Subunit A2 is transcriptionally active but its transcription activity is not enhanced by binding to the dimeric complex of the SIII regulatory subunits B and C (elongin BC complex). The chain is Elongin-A2 from Homo sapiens (Human).